The primary structure comprises 516 residues: Exoglucanase 1 (516 aa).

The first 17 residues, 1-17, serve as a signal peptide directing secretion; sequence MRASLLAFSLAAAVAGG. Positions 18 to 445 are catalytic; sequence QQAGTLTAKR…GHLGISPFSG (428 aa). A glycan (N-linked (GlcNAc...) asparagine) is linked at N45. E223 serves as the catalytic Nucleophile. E228 functions as the Proton donor in the catalytic mechanism. N281 carries N-linked (GlcNAc...) asparagine glycosylation. A disordered region spans residues 444-481; the sequence is SGGSSGTPPSNPSSSASPTSSTAKPSSTSTASNPSGTG. Positions 446 to 480 are linker; that stretch reads GSSGTPPSNPSSSASPTSSTAKPSSTSTASNPSGT. The segment covering 449–481 has biased composition (low complexity); that stretch reads GTPPSNPSSSASPTSSTAKPSSTSTASNPSGTG. One can recognise a CBM1 domain in the interval 480–516; the sequence is TGAAHWAQCGGIGFSGPTTCPEPYTCAKDHDIYSQCV. Disulfide bonds link C488-C505 and C499-C515.

The protein belongs to the glycosyl hydrolase 7 (cellulase C) family.

The protein resides in the secreted. It carries out the reaction Hydrolysis of (1-&gt;4)-beta-D-glucosidic linkages in cellulose and cellotetraose, releasing cellobiose from the non-reducing ends of the chains.. In Neurospora crassa (strain ATCC 24698 / 74-OR23-1A / CBS 708.71 / DSM 1257 / FGSC 987), this protein is Exoglucanase 1 (cbh-1).